A 127-amino-acid polypeptide reads, in one-letter code: MSKLRFTTDHEWLRQDDDGLLTVGITAYAQDALGDVVFVQLPELGEHAAGSEVAVLESVKAASNILMPLDGEVVAINDALPDAPELVNQDPLGEAWFFRFRPADAGAWEKLLDQAAYDRLLNANADA.

The 82-residue stretch at 20 to 101 (LLTVGITAYA…LGEAWFFRFR (82 aa)) folds into the Lipoyl-binding domain. Residue K60 is modified to N6-lipoyllysine.

The protein belongs to the GcvH family. As to quaternary structure, the glycine cleavage system is composed of four proteins: P, T, L and H. It depends on (R)-lipoate as a cofactor.

Functionally, the glycine cleavage system catalyzes the degradation of glycine. The H protein shuttles the methylamine group of glycine from the P protein to the T protein. The protein is Glycine cleavage system H protein 1 of Pseudomonas aeruginosa (strain ATCC 15692 / DSM 22644 / CIP 104116 / JCM 14847 / LMG 12228 / 1C / PRS 101 / PAO1).